The following is a 108-amino-acid chain: UPF0060 membrane protein YE2027 (108 aa).

The next 4 helical transmembrane spans lie at 6–26, 29–49, 59–79, and 85–105; these read LLFF…YLWL, GASM…VWLL, VYAA…RVVD, and LFDW…VAGW.

It belongs to the UPF0060 family.

Its subcellular location is the cell inner membrane. The protein is UPF0060 membrane protein YE2027 of Yersinia enterocolitica serotype O:8 / biotype 1B (strain NCTC 13174 / 8081).